A 202-amino-acid chain; its full sequence is Recombination protein RecR (202 aa).

The C4-type zinc-finger motif lies at 61 to 76 (CARCNSFTEDEVCATC). One can recognise a Toprim domain in the interval 84 to 179 (GLLCIVETPA…KVTRLARGVP (96 aa)).

It belongs to the RecR family.

In terms of biological role, may play a role in DNA repair. It seems to be involved in an RecBC-independent recombinational process of DNA repair. It may act with RecF and RecO. The sequence is that of Recombination protein RecR from Bordetella pertussis (strain Tohama I / ATCC BAA-589 / NCTC 13251).